We begin with the raw amino-acid sequence, 1267 residues long: Ankyrin repeat and ELMO domain-containing protein D (1267 aa).

In terms of domain architecture, ELMO spans 307-466 (SHQRLLETLW…FVSGLASEVL (160 aa)). A compositionally biased stretch (basic and acidic residues) spans 486-496 (KKKEKKSEKRG). The segment at 486 to 598 (KKKEKKSEKR…NNHILNNNHL (113 aa)) is disordered. The segment covering 507 to 598 (GSNGNINSTT…NNHILNNNHL (92 aa)) has biased composition (low complexity). ANK repeat units follow at residues 655-685 (DGNS…FLNT), 689-718 (QGLT…DPFI), 767-796 (TLET…NINN), and 801-830 (SGQN…DPSI). Disordered stretches follow at residues 854 to 908 (NPTK…NSTS), 924 to 1040 (TSIN…SPIF), 1057 to 1082 (SPTQ…NGAE), and 1103 to 1215 (ENLT…PPKD). Low complexity-rich tracts occupy residues 859–870 (SRSTSSTSSSTS), 895–908 (ITNN…NSTS), and 924–1033 (TSIN…STSP). Positions 1057 to 1080 (SPTQESPQVISTPTSPPYLSNNNG) are enriched in polar residues. Composition is skewed to low complexity over residues 1108–1176 (NSGN…IGSH) and 1184–1213 (HNGP…VTPP).

The polypeptide is Ankyrin repeat and ELMO domain-containing protein D (elmoD) (Dictyostelium discoideum (Social amoeba)).